A 297-amino-acid chain; its full sequence is MRKKVRKAVIPAAGLGTRFLPATKAQPKEMLPIVDKPAIQYIVEEAAESGIEDILIITGRNKRSIEDHFDRSAELEFNLREKGKTETLKEMQQIADLANIHYIRQKEPLGLGHAVLCAEHFIGDEPFAVLLGDDIMVSETPALRQLMDVYDVYGTEVVGVQSVLPEDVSKYGIINTSGSQGHVYEVNDLVEKPSPEEAPSEIAVMGRYVLNSSIFSVLKTIGRGAGNEIQLTDALREVCRKEPIHARLLEGNRYDIGDKLGCFKASTEIGLMRPEMRSQLLAYLEDVIKRETKEMLR.

Positions 1–27 (MRKKVRKAVIPAAGLGTRFLPATKAQP) are cleaved as a signal peptide.

This sequence belongs to the UDPGP type 2 family. In terms of assembly, homodimer.

It catalyses the reaction alpha-D-glucose 1-phosphate + UTP + H(+) = UDP-alpha-D-glucose + diphosphate. It participates in glycolipid metabolism; diglucosyl-diacylglycerol biosynthesis. Catalyzes the formation of UDP-glucose from glucose-1-phosphate and UTP. This is an intermediate step in the biosynthesis of diglucosyl-diacylglycerol (Glc2-DAG), i.e. the predominant glycolipid found in B.subtilis membrane, which is also used as a membrane anchor for lipoteichoic acid (LTA). YngB contributes to wall teichoic acid (WTA) glucosylation and glycolipid formation under anaerobic fermentative growth conditions. Might also enter other glycosylation pathways, leading to the decorating of other cell envelope components with glucose residues under anaerobic or other growth conditions. The sequence is that of UTP--glucose-1-phosphate uridylyltransferase YngB (yngB) from Bacillus subtilis (strain 168).